The sequence spans 228 residues: Cytochrome b5 domain-containing protein 1 (228 aa).

The region spanning 17 to 83 (RRYFTPSEVA…DPQTRDIRKH (67 aa)) is the Cytochrome b5 heme-binding domain. His-83 is a heme binding site.

It belongs to the cytochrome b5 family.

The protein localises to the cytoplasm. The protein resides in the cytoskeleton. It localises to the cilium axoneme. Radial spoke stalk protein that binds heme under oxidizing conditions. Required for the coordinated beating of multiple cilia maybe by functioning in a redox signaling pathway. In Mus musculus (Mouse), this protein is Cytochrome b5 domain-containing protein 1 (Cyb5d1).